The following is a 431-amino-acid chain: Probable 3-hydroxy-3-methylglutaryl-coenzyme A reductase (431 aa).

Residues Glu-85 and Asp-278 each act as charge relay system in the active site. Catalysis depends on His-375, which acts as the Proton donor.

This sequence belongs to the HMG-CoA reductase family.

It carries out the reaction (R)-mevalonate + 2 NAD(+) + CoA = (3S)-3-hydroxy-3-methylglutaryl-CoA + 2 NADH + 2 H(+). Its pathway is metabolic intermediate metabolism; (R)-mevalonate degradation; (S)-3-hydroxy-3-methylglutaryl-CoA from (R)-mevalonate: step 1/1. In terms of biological role, converts HMG-CoA to mevalonate. The protein is Probable 3-hydroxy-3-methylglutaryl-coenzyme A reductase of Borreliella burgdorferi (strain ATCC 35210 / DSM 4680 / CIP 102532 / B31) (Borrelia burgdorferi).